A 253-amino-acid polypeptide reads, in one-letter code: Phosphate import ATP-binding protein PstB 1 (253 aa).

The ABC transporter domain maps to 7–248 (LTVSDLSLYY…PEKQETSDYI (242 aa)). 39–46 (GPSGCGKS) contacts ATP.

Belongs to the ABC transporter superfamily. Phosphate importer (TC 3.A.1.7) family. As to quaternary structure, the complex is composed of two ATP-binding proteins (PstB), two transmembrane proteins (PstC and PstA) and a solute-binding protein (PstS).

It is found in the cell membrane. It catalyses the reaction phosphate(out) + ATP + H2O = ADP + 2 phosphate(in) + H(+). In terms of biological role, part of the ABC transporter complex PstSACB involved in phosphate import. Responsible for energy coupling to the transport system. This Lactococcus lactis subsp. lactis (strain IL1403) (Streptococcus lactis) protein is Phosphate import ATP-binding protein PstB 1.